A 277-amino-acid polypeptide reads, in one-letter code: MSLKVLNPVTPSLRGTVMVNRVALWRGKPEKSLVVGRVSSGGRNAHGVITVRHRGGGHKRLHRVVDLKRNKDGVQAVVQRLEYDPNRTAFLALVRYEDGELSYILAPDGLKVSDVVVSGVGSDVLPGNCLQLGSIPAGTFVHNVELRPCGGGIIARAAGSYAQVMGRDGAYVLLRLGSGEVRKILALCRATVGVVSNLNNQNIKLGKAGRNRWLGFRPTVRGVAMNPVDHPHGGGEGKTSGGRNSVTPWGVPTKGKKTRKRGKHSDKYIKVSSVRKR.

The disordered stretch occupies residues methionine 225–arginine 277. Residues lysine 254–histidine 264 show a composition bias toward basic residues.

It belongs to the universal ribosomal protein uL2 family. Part of the 50S ribosomal subunit. Forms a bridge to the 30S subunit in the 70S ribosome.

In terms of biological role, one of the primary rRNA binding proteins. Required for association of the 30S and 50S subunits to form the 70S ribosome, for tRNA binding and peptide bond formation. It has been suggested to have peptidyltransferase activity; this is somewhat controversial. Makes several contacts with the 16S rRNA in the 70S ribosome. In Anaplasma marginale (strain Florida), this protein is Large ribosomal subunit protein uL2.